The chain runs to 556 residues: 2-succinyl-5-enolpyruvyl-6-hydroxy-3-cyclohexene-1-carboxylate synthase (556 aa).

This sequence belongs to the TPP enzyme family. MenD subfamily. As to quaternary structure, homodimer. The cofactor is Mg(2+). It depends on Mn(2+) as a cofactor. Thiamine diphosphate serves as cofactor.

It catalyses the reaction isochorismate + 2-oxoglutarate + H(+) = 5-enolpyruvoyl-6-hydroxy-2-succinyl-cyclohex-3-ene-1-carboxylate + CO2. The protein operates within quinol/quinone metabolism; 1,4-dihydroxy-2-naphthoate biosynthesis; 1,4-dihydroxy-2-naphthoate from chorismate: step 2/7. It functions in the pathway quinol/quinone metabolism; menaquinone biosynthesis. Its function is as follows. Catalyzes the thiamine diphosphate-dependent decarboxylation of 2-oxoglutarate and the subsequent addition of the resulting succinic semialdehyde-thiamine pyrophosphate anion to isochorismate to yield 2-succinyl-5-enolpyruvyl-6-hydroxy-3-cyclohexene-1-carboxylate (SEPHCHC). This chain is 2-succinyl-5-enolpyruvyl-6-hydroxy-3-cyclohexene-1-carboxylate synthase, found in Mycobacterium leprae (strain Br4923).